The chain runs to 612 residues: Alpha-glycerophosphate oxidase (612 aa).

21–49 (DLLIIGGGITGAGVALQAAASGLDTGLIE) is a binding site for FAD. Residues 399–408 (ETSTSEKELD) are compositionally biased toward basic and acidic residues. The disordered stretch occupies residues 399-418 (ETSTSEKELDPSAVSRGSSF).

Belongs to the FAD-dependent glycerol-3-phosphate dehydrogenase family. FAD serves as cofactor.

The protein localises to the cytoplasm. It catalyses the reaction sn-glycerol 3-phosphate + O2 = dihydroxyacetone phosphate + H2O2. This Streptococcus pyogenes serotype M6 (strain ATCC BAA-946 / MGAS10394) protein is Alpha-glycerophosphate oxidase (glpO).